The sequence spans 184 residues: GTP-binding protein Rheb (184 aa).

Lys-8 participates in a covalent cross-link: Glycyl lysine isopeptide (Lys-Gly) (interchain with G-Cter in ubiquitin). Residues Ser-16, Val-17, Gly-18, Lys-19, Ser-20, Ser-21, Val-32, and Asp-33 each coordinate GDP. Residues Ser-16, Val-17, Gly-18, Lys-19, Ser-20, Ser-21, Val-32, Asp-33, Tyr-35, Pro-37, Thr-38, Gly-63, Asn-119, Lys-120, and Asp-122 each coordinate GTP. Ser-20 provides a ligand contact to Mg(2+). The Effector region motif lies at 35-43; sequence YDPTIENTF. Thr-38 contacts Mg(2+). Asn-119 serves as a coordination point for GDP. Asp-122 is a GDP binding site. Position 130 is a phosphoserine; by MAPKAPK5 (Ser-130). Ala-150 is a GDP binding site. Residue Ala-150 coordinates GTP. Cysteine methyl ester is present on Cys-181. Cys-181 carries S-farnesyl cysteine lipidation. Positions 182–184 are cleaved as a propeptide — removed in mature form; sequence SVM.

Belongs to the small GTPase superfamily. Rheb family. As to quaternary structure, associates with the mTORC1 complex (MTOR, MLST8 and RPTOR) in a guanyl nucleotide-independent manner. Interacts with TSC2. Interacts with MCRS1; the interaction maintains RHEB at the lysosome in its active GTP-bound form and prevents its interaction with the mTORC1 complex inhibitor TSC2, ensuring activation of the mTORC1 complex by RHEB. Interacts (when prenylated) with PDE6D; this promotes release from membranes. Post-translationally, farnesylation is important for efficiently activating mTORC1-mediated signaling. In terms of processing, polyubiquitinated in response to amino acid, promoting its interaction with MTOR and mTORC1 activation. Deubiquitination by ATXN3 promotes recruitment of the TSC-TBC complex and RHEB inactivation by TSC2. Monoubiquitinated at Lys-8 by RNF152, promoting its association with the TSC-TBC complex. Deubiquitinated at Lys-8 by USP4, promoting mTORC1 activation. Phosphorylation by MAPKAPK5 impairs GTP-binding and inactivation.

It localises to the endomembrane system. The protein resides in the lysosome membrane. Its subcellular location is the golgi apparatus membrane. The protein localises to the endoplasmic reticulum membrane. It is found in the cytoplasm. It localises to the cytosol. The enzyme catalyses GTP + H2O = GDP + phosphate + H(+). Alternates between an inactive form bound to GDP and an active form bound to GTP. Inactivated by the TSC-TBC complex via the GTPase activating protein (GAP) domain of TSC2. Autoinhibited by Tyr-35, which constrains the active site conformation, restricting the access of the catalytic Asp-65 to the nucleotide-binding pocket. Its function is as follows. Small GTPase that acts as an allosteric activator of the canonical mTORC1 complex, an evolutionarily conserved central nutrient sensor that stimulates anabolic reactions and macromolecule biosynthesis to promote cellular biomass generation and growth. In response to nutrients, growth factors or amino acids, specifically activates the protein kinase activity of MTOR, the catalytic component of the mTORC1 complex: acts by causing a conformational change that allows the alignment of residues in the active site of MTOR, thereby enhancing the phosphorylation of ribosomal protein S6 kinase (RPS6KB1 and RPS6KB2) and EIF4EBP1 (4E-BP1). RHEB is also required for localization of the TSC-TBC complex to lysosomal membranes. In response to starvation, RHEB is inactivated by the TSC-TBC complex, preventing activation of mTORC1. Has low intrinsic GTPase activity. This chain is GTP-binding protein Rheb, found in Mus musculus (Mouse).